We begin with the raw amino-acid sequence, 333 residues long: Holliday junction branch migration complex subunit RuvB (333 aa).

Residues 1 to 182 (MDERLLSGES…FGVLSRLEYY (182 aa)) are large ATPase domain (RuvB-L). Residues L21, R22, G63, K66, T67, T68, 129–131 (EDF), R172, Y182, and R219 contribute to the ATP site. Mg(2+) is bound at residue T67. Residues 183-253 (TVDQLSEIVE…ITQMALELLQ (71 aa)) are small ATPAse domain (RuvB-S). The tract at residues 256-333 (KLGLDHIDHK…EHFGMEMPKV (78 aa)) is head domain (RuvB-H). DNA contacts are provided by R311 and R316.

Belongs to the RuvB family. Homohexamer. Forms an RuvA(8)-RuvB(12)-Holliday junction (HJ) complex. HJ DNA is sandwiched between 2 RuvA tetramers; dsDNA enters through RuvA and exits via RuvB. An RuvB hexamer assembles on each DNA strand where it exits the tetramer. Each RuvB hexamer is contacted by two RuvA subunits (via domain III) on 2 adjacent RuvB subunits; this complex drives branch migration. In the full resolvosome a probable DNA-RuvA(4)-RuvB(12)-RuvC(2) complex forms which resolves the HJ.

The protein localises to the cytoplasm. It carries out the reaction ATP + H2O = ADP + phosphate + H(+). In terms of biological role, the RuvA-RuvB-RuvC complex processes Holliday junction (HJ) DNA during genetic recombination and DNA repair, while the RuvA-RuvB complex plays an important role in the rescue of blocked DNA replication forks via replication fork reversal (RFR). RuvA specifically binds to HJ cruciform DNA, conferring on it an open structure. The RuvB hexamer acts as an ATP-dependent pump, pulling dsDNA into and through the RuvAB complex. RuvB forms 2 homohexamers on either side of HJ DNA bound by 1 or 2 RuvA tetramers; 4 subunits per hexamer contact DNA at a time. Coordinated motions by a converter formed by DNA-disengaged RuvB subunits stimulates ATP hydrolysis and nucleotide exchange. Immobilization of the converter enables RuvB to convert the ATP-contained energy into a lever motion, pulling 2 nucleotides of DNA out of the RuvA tetramer per ATP hydrolyzed, thus driving DNA branch migration. The RuvB motors rotate together with the DNA substrate, which together with the progressing nucleotide cycle form the mechanistic basis for DNA recombination by continuous HJ branch migration. Branch migration allows RuvC to scan DNA until it finds its consensus sequence, where it cleaves and resolves cruciform DNA. This is Holliday junction branch migration complex subunit RuvB from Bacillus cereus (strain ATCC 10987 / NRS 248).